The sequence spans 166 residues: PTS system glucose-specific EIIA component (166 aa).

One can recognise a PTS EIIA type-1 domain in the interval 34 to 138 (DPVFAQKMMG…SVISPIIITN (105 aa)). Positions 71 and 86 each coordinate Zn(2+). The active-site Tele-phosphohistidine intermediate; for EIIA activity is the His86. His86 carries the post-translational modification Phosphohistidine; by HPr.

As to quaternary structure, heterodimer with glycerol kinase (glpk). Requires Zn(2+) as cofactor.

Its subcellular location is the cytoplasm. In terms of biological role, the phosphoenolpyruvate-dependent sugar phosphotransferase system (sugar PTS), a major carbohydrate active transport system, catalyzes the phosphorylation of incoming sugar substrates concomitantly with their translocation across the cell membrane. The enzyme II complex composed of PtsG and Crr is involved in glucose transport. This chain is PTS system glucose-specific EIIA component (crr), found in Staphylococcus aureus (strain Mu50 / ATCC 700699).